The sequence spans 602 residues: Elongation factor 4 (602 aa).

The tr-type G domain maps to 7 to 189; the sequence is KYIRNFSIVA…AIVNKVPAPD (183 aa). GTP contacts are provided by residues 19 to 24 and 136 to 139; these read DHGKST and NKID.

Belongs to the TRAFAC class translation factor GTPase superfamily. Classic translation factor GTPase family. LepA subfamily.

The protein localises to the cell membrane. It catalyses the reaction GTP + H2O = GDP + phosphate + H(+). Required for accurate and efficient protein synthesis under certain stress conditions. May act as a fidelity factor of the translation reaction, by catalyzing a one-codon backward translocation of tRNAs on improperly translocated ribosomes. Back-translocation proceeds from a post-translocation (POST) complex to a pre-translocation (PRE) complex, thus giving elongation factor G a second chance to translocate the tRNAs correctly. Binds to ribosomes in a GTP-dependent manner. The protein is Elongation factor 4 of Clostridium botulinum (strain ATCC 19397 / Type A).